A 251-amino-acid chain; its full sequence is Probable phosphatase Sputw3181_2734 (251 aa).

9 residues coordinate Zn(2+): H8, H10, H16, H41, E74, H102, H132, D193, and H195.

Belongs to the PHP family. Requires Zn(2+) as cofactor.

The sequence is that of Probable phosphatase Sputw3181_2734 from Shewanella sp. (strain W3-18-1).